The following is a 515-amino-acid chain: Transcription termination factor Rho (515 aa).

One can recognise a Rho RNA-BD domain in the interval 146–221 (DVLFTGVLDV…VKIKSINDQD (76 aa)). ATP-binding positions include 264-269 (GKGQRA), 276-281 (KAGKTT), and Arg307.

Belongs to the Rho family. Homohexamer. The homohexamer assembles into an open ring structure.

In terms of biological role, facilitates transcription termination by a mechanism that involves Rho binding to the nascent RNA, activation of Rho's RNA-dependent ATPase activity, and release of the mRNA from the DNA template. The polypeptide is Transcription termination factor Rho (Borreliella burgdorferi (strain ATCC 35210 / DSM 4680 / CIP 102532 / B31) (Borrelia burgdorferi)).